Here is a 417-residue protein sequence, read N- to C-terminus: Putative F-box protein At3g58950 (417 aa).

The 53-residue stretch at 1 to 53 (MDLFSSLPDEVLCHILSFLTTKEAALASVVSKRWRNQFALVPNLDIDEEGKRE) folds into the F-box domain.

This chain is Putative F-box protein At3g58950, found in Arabidopsis thaliana (Mouse-ear cress).